We begin with the raw amino-acid sequence, 384 residues long: Glucans biosynthesis protein C (384 aa).

A run of 10 helical transmembrane segments spans residues 17–37 (AWLMLLGIPFHISLIYSTHSW), 54–74 (FIHAFRMQVFFVISGYFSYML), 91–111 (VGIPMLTAIPLLTLPQFILLQ), 140–160 (LWFLLVLVILTTVSIGIFTWF), 173–193 (AISLVRLSLIFFLLGMAYAAI), 212–232 (FIVMQTLFYVPFFILGALAFI), 240–260 (FTTPSRGCTLGAAVAFIAYLL), 274–294 (TESVITMVMGLWMVNVVFSLG), 311–331 (ASLFIYLVHHPLTLFFGAYIT), and 338–358 (LIGFLCGLIFVMGIALILYEI).

This sequence belongs to the acyltransferase 3 family. OpgC subfamily.

Its subcellular location is the cell membrane. It participates in glycan metabolism; osmoregulated periplasmic glucan (OPG) biosynthesis. Functionally, necessary for the succinyl substitution of periplasmic glucans. Could catalyze the transfer of succinyl residues from the cytoplasmic side of the membrane to the nascent glucan backbones on the periplasmic side of the membrane. This chain is Glucans biosynthesis protein C, found in Salmonella gallinarum (strain 287/91 / NCTC 13346).